We begin with the raw amino-acid sequence, 288 residues long: Heme oxygenase 1 (288 aa).

Topologically, residues 1–265 (MERPQPDSMP…KPPLNTRSQA (265 aa)) are cytoplasmic. K18, H25, Y134, and R183 together coordinate heme b. Positions 223–260 (HDTKDQSPSRAPGLRQRASNKVQDSAPVETPRGKPPLN) are disordered. S229 is subject to Phosphoserine. Residues 266–288 (PLLRWVLTLSFLVATVAVGLYAM) form a helical; Anchor for type IV membrane protein membrane-spanning segment.

Belongs to the heme oxygenase family. As to quaternary structure, (Microbial infection) Interacts with SARS-CoV-2 ORF3A protein; the interaction promotes ORF3A-induced autophagy but is unlikely to be involved in ORF3A-mediated induction of reticulophagy. Homodimer and higher order homooligomer. Oligomerization is crucial for its stability and function in the endoplasmic reticulum. Interacts with FLVCR2; this interaction is potentiated in the presence of heme. In terms of processing, a soluble form arises by proteolytic removal of the membrane anchor. As to expression, expressed at higher levels in renal cancer tissue than in normal tissue (at protein level).

Its subcellular location is the endoplasmic reticulum membrane. The catalysed reaction is heme b + 3 reduced [NADPH--hemoprotein reductase] + 3 O2 = biliverdin IXalpha + CO + Fe(2+) + 3 oxidized [NADPH--hemoprotein reductase] + 3 H2O + H(+). Catalyzes the oxidative cleavage of heme at the alpha-methene bridge carbon, released as carbon monoxide (CO), to generate biliverdin IXalpha, while releasing the central heme iron chelate as ferrous iron. Affords protection against programmed cell death and this cytoprotective effect relies on its ability to catabolize free heme and prevent it from sensitizing cells to undergo apoptosis. Functionally, (Microbial infection) During SARS-COV-2 infection, promotes SARS-CoV-2 ORF3A-mediated autophagy but is unlikely to be required for ORF3A-mediated induction of reticulophagy. Its function is as follows. Catalyzes the oxidative cleavage of heme at the alpha-methene bridge carbon, released as carbon monoxide (CO), to generate biliverdin IXalpha, while releasing the central heme iron chelate as ferrous iron. The polypeptide is Heme oxygenase 1 (HMOX1) (Homo sapiens (Human)).